Consider the following 356-residue polypeptide: Tyrosine recombinase XerS (356 aa).

The 106-residue stretch at 16–121 (IMPWYVLDYY…ALSSLYKYLT (106 aa)) folds into the Core-binding (CB) domain. In terms of domain architecture, Tyr recombinase spans 169–354 (AFLDYVDKEY…VNDEQKNALD (186 aa)). Catalysis depends on residues Arg-210, Lys-234, His-306, Arg-309, and His-332. Tyr-341 acts as the O-(3'-phospho-DNA)-tyrosine intermediate in catalysis.

This sequence belongs to the 'phage' integrase family. XerS subfamily.

It localises to the cytoplasm. Its activity is regulated as follows. FtsK is required for recombination. Site-specific tyrosine recombinase, which acts by catalyzing the cutting and rejoining of the recombining DNA molecules. Essential to convert dimers of the bacterial chromosome into monomers to permit their segregation at cell division. The protein is Tyrosine recombinase XerS of Streptococcus pyogenes serotype M5 (strain Manfredo).